The following is a 100-amino-acid chain: Large ribosomal subunit protein bL21 (100 aa).

The protein belongs to the bacterial ribosomal protein bL21 family. As to quaternary structure, part of the 50S ribosomal subunit. Contacts protein L20.

In terms of biological role, this protein binds to 23S rRNA in the presence of protein L20. The chain is Large ribosomal subunit protein bL21 from Wolbachia sp. subsp. Brugia malayi (strain TRS).